We begin with the raw amino-acid sequence, 90 residues long: Probable Fe(2+)-trafficking protein (90 aa).

This sequence belongs to the Fe(2+)-trafficking protein family. Monomer.

Could be a mediator in iron transactions between iron acquisition and iron-requiring processes, such as synthesis and/or repair of Fe-S clusters in biosynthetic enzymes. The protein is Probable Fe(2+)-trafficking protein of Edwardsiella ictaluri (strain 93-146).